The chain runs to 1563 residues: Integrator complex subunit 5-like protein (1563 aa).

Basic and acidic residues-rich tracts occupy residues 1-21 and 31-44; these read MKEE…RNDN and EDWR…KNEN. Disordered regions lie at residues 1-63, 102-208, and 270-310; these read MKEE…YDDD, KKSK…NITY, and NSLN…QQNP. The segment covering 52 to 63 has biased composition (acidic residues); the sequence is GDSDDDDYYDDD. 2 stretches are compositionally biased toward low complexity: residues 109 to 133 and 141 to 202; these read TAAT…TATA and NNLL…NNNN. The helical transmembrane segment at 350–370 threads the bilayer; that stretch reads DSIINWSLSTLTIITRLLIIL. A compositionally biased stretch (low complexity) spans 381–398; sequence QQQQQQQQQQQQQQQQQQ. Disordered stretches follow at residues 381 to 417, 466 to 498, 637 to 694, and 784 to 828; these read QQQQ…RQPI, SKSS…SSKT, FDNN…DNSS, and ILNN…SQEI. Over residues 405–414 the composition is skewed to pro residues; that stretch reads FPPPPPPPLR. Low complexity-rich tracts occupy residues 468-496, 639-686, and 786-824; these read SSSS…SSSS, NNNN…NNNN, and NNNN…QQQQ. The chain crosses the membrane as a helical span at residues 877-897; sequence IIIKLISLIGMDSIYSSLIIL. Disordered stretches follow at residues 1154 to 1173 and 1268 to 1303; these read SGNF…DEYG and KQRM…DQNE. The span at 1160–1172 shows a compositional bias: acidic residues; the sequence is GDDDDDEYGDDEY. Low complexity predominate over residues 1277–1288; it reads SIQQNGNINNEQ. Residues 1289 to 1303 show a composition bias toward acidic residues; sequence QQEEDDNDDADDQNE.

Belongs to the Integrator subunit 5 family. Component of the Integrator complex. The core complex associates with protein phosphatase 2A subunits, to form the Integrator-PP2A (INTAC) complex.

The protein resides in the nucleus. Its subcellular location is the cytoplasm. The protein localises to the nucleus membrane. Component of the integrator complex, a multiprotein complex that terminates RNA polymerase II (Pol II) transcription in the promoter-proximal region of genes. The integrator complex provides a quality checkpoint during transcription elongation by driving premature transcription termination of transcripts that are unfavorably configured for transcriptional elongation: the complex terminates transcription by (1) catalyzing dephosphorylation of the C-terminal domain (CTD) of Pol II subunit polr2a, (2) degrading the exiting nascent RNA transcript via endonuclease activity and (3) promoting the release of Pol II from bound DNA. The integrator complex is also involved in terminating the synthesis of non-coding Pol II transcripts, such as enhancer RNAs (eRNAs), small nuclear RNAs (snRNAs), telomerase RNAs and long non-coding RNAs (lncRNAs). The sequence is that of Integrator complex subunit 5-like protein from Dictyostelium discoideum (Social amoeba).